A 241-amino-acid polypeptide reads, in one-letter code: Uridylate kinase (241 aa).

14-17 contributes to the ATP binding site; sequence KLSG. Residues 22-27 form an involved in allosteric activation by GTP region; sequence GGLGMG. A UMP-binding site is contributed by glycine 56. ATP-binding residues include glycine 57 and arginine 61. Residues aspartate 77 and 138-145 each bind UMP; that span reads TGNPFFTT. Threonine 165, tyrosine 171, and aspartate 174 together coordinate ATP.

Belongs to the UMP kinase family. Homohexamer.

It localises to the cytoplasm. It carries out the reaction UMP + ATP = UDP + ADP. It participates in pyrimidine metabolism; CTP biosynthesis via de novo pathway; UDP from UMP (UMPK route): step 1/1. With respect to regulation, allosterically activated by GTP. Inhibited by UTP. In terms of biological role, catalyzes the reversible phosphorylation of UMP to UDP. The protein is Uridylate kinase of Psychrobacter sp. (strain PRwf-1).